Reading from the N-terminus, the 148-residue chain is Putative pre-16S rRNA nuclease (148 aa).

It belongs to the YqgF nuclease family.

It is found in the cytoplasm. In terms of biological role, could be a nuclease involved in processing of the 5'-end of pre-16S rRNA. The chain is Putative pre-16S rRNA nuclease from Nitrosomonas europaea (strain ATCC 19718 / CIP 103999 / KCTC 2705 / NBRC 14298).